A 531-amino-acid polypeptide reads, in one-letter code: Muscarinic acetylcholine receptor M5 (531 aa).

The Extracellular segment spans residues 1–28; it reads MEGESYNESTVNGTPVNHQALERHGLWE. Residue Asn-7 is glycosylated (N-linked (GlcNAc...) asparagine). Residues 29-52 form a helical membrane-spanning segment; that stretch reads VITIAVVTAVVSLMTIVGNVLVMI. Residues 53-65 lie on the Cytoplasmic side of the membrane; sequence SFKVNSQLKTVNN. The chain crosses the membrane as a helical span at residues 66–86; it reads YYLLSLACADLIIGIFSMNLY. Topologically, residues 87 to 103 are extracellular; the sequence is TTYILMGRWVLGSLACD. Residues Cys-102 and Cys-182 are joined by a disulfide bond. Residues 104–125 traverse the membrane as a helical segment; that stretch reads LWLALDYVASNASVMNLLVISF. Residues 126-145 are Cytoplasmic-facing; sequence DRYFSITRPLTYRAKRTPKR. Residues 146–168 traverse the membrane as a helical segment; it reads AGIMIGLAWLVSFILWAPAILCW. Over 169-190 the chain is Extracellular; it reads QYLVGKRTVPPDECQIQFLSEP. A helical transmembrane segment spans residues 191 to 213; that stretch reads TITFGTAIAAFYIPVSVMTILYC. Residues 214 to 442 lie on the Cytoplasmic side of the membrane; sequence RIYRETEKRT…LVKERKAAQT (229 aa). 2 disordered regions span residues 259-295 and 327-346; these read SLAQ…DWEK and EAKE…ETVV. Over residues 267-287 the composition is skewed to low complexity; sequence QASWSSSRRSTSTTGKTTQAT. Positions 334–346 are enriched in polar residues; sequence KESNTQETKETVV. The chain crosses the membrane as a helical span at residues 443-463; it reads LSAILLAFIITWTPYNIMVLV. The Extracellular portion of the chain corresponds to 464-477; it reads STFCDKCVPVTLWH. A helical membrane pass occupies residues 478 to 497; sequence LGYWLCYVNSTINPICYALC. Residues 498–531 lie on the Cytoplasmic side of the membrane; the sequence is NRTFRKTFKLLLLCRWKKKKVEEKLYWQGNSKLP. A phosphothreonine mark is found at Thr-500 and Thr-504.

Belongs to the G-protein coupled receptor 1 family. Muscarinic acetylcholine receptor subfamily. CHRM5 sub-subfamily.

The protein resides in the cell membrane. It is found in the postsynaptic cell membrane. In terms of biological role, the muscarinic acetylcholine receptor mediates various cellular responses, including inhibition of adenylate cyclase, breakdown of phosphoinositides and modulation of potassium channels through the action of G proteins. Primary transducing effect is Pi turnover. This Rattus norvegicus (Rat) protein is Muscarinic acetylcholine receptor M5 (Chrm5).